Reading from the N-terminus, the 458-residue chain is Cytoplasmic tRNA 2-thiolation protein 2 (458 aa).

This sequence belongs to the CTU2/NCS2 family.

Its subcellular location is the cytoplasm. The protein operates within tRNA modification; 5-methoxycarbonylmethyl-2-thiouridine-tRNA biosynthesis. In terms of biological role, plays a central role in 2-thiolation of mcm(5)S(2)U at tRNA wobble positions of tRNA(Lys), tRNA(Glu) and tRNA(Gln). May act by forming a heterodimer with NCS6/CTU1 that ligates sulfur from thiocarboxylated URM1 onto the uridine of tRNAs at wobble position. The polypeptide is Cytoplasmic tRNA 2-thiolation protein 2 (Arabidopsis thaliana (Mouse-ear cress)).